The sequence spans 48 residues: Sperm protamine R3 isoform 1 (48 aa).

Basic residues predominate over residues 1–29 (ARRRHSMKKKRKSVRRRKTRKNQRKRKNS). Positions 1-48 (ARRRHSMKKKRKSVRRRKTRKNQRKRKNSLGRSFKQHGFLKQPPRFRP) are disordered.

As to expression, testis.

It localises to the nucleus. It is found in the chromosome. In terms of biological role, protamines substitute for histones in the chromatin of sperm during the haploid phase of spermatogenesis. They compact sperm DNA into a highly condensed, stable and inactive complex. The chain is Sperm protamine R3 isoform 1 from Hydrolagus colliei (Spotted ratfish).